The chain runs to 374 residues: Putative C-&gt;U-editing enzyme APOBEC-4 (374 aa).

The region spanning 60-176 (PQTKHLTFYE…AWNRKALQSL (117 aa)) is the CMP/dCMP-type deaminase domain. H92 contributes to the Zn(2+) binding site. E94 serves as the catalytic Proton donor. 2 residues coordinate Zn(2+): C126 and C133. Residues 259–280 (EKHPLGSAAPAQRQPTRGQDPR) are disordered.

The protein belongs to the cytidine and deoxycytidylate deaminase family. The cofactor is Zn(2+). As to expression, predominantly expressed in testis.

Functionally, putative C to U editing enzyme whose physiological substrate is not yet known. This chain is Putative C-&gt;U-editing enzyme APOBEC-4 (Apobec4), found in Mus musculus (Mouse).